We begin with the raw amino-acid sequence, 135 residues long: Ribonuclease VapC9 (135 aa).

One can recognise a PINc domain in the interval Val-15 to Ile-118. Mg(2+) is bound by residues Asp-17 and Asp-88.

Belongs to the PINc/VapC protein family. As to quaternary structure, dimer. Mg(2+) serves as cofactor.

Its function is as follows. Toxic component of a type II toxin-antitoxin (TA) system. An RNase. The chain is Ribonuclease VapC9 from Archaeoglobus fulgidus (strain ATCC 49558 / DSM 4304 / JCM 9628 / NBRC 100126 / VC-16).